The chain runs to 441 residues: 3-phosphoshikimate 1-carboxyvinyltransferase (441 aa).

Residues Lys-26, Ser-27, and Arg-31 each coordinate 3-phosphoshikimate. Lys-26 serves as a coordination point for phosphoenolpyruvate. Positions 99 and 127 each coordinate phosphoenolpyruvate. 3-phosphoshikimate-binding residues include Ser-173, Ser-174, Gln-175, Ser-203, Asp-320, and Lys-347. Gln-175 serves as a coordination point for phosphoenolpyruvate. Asp-320 (proton acceptor) is an active-site residue. Arg-351, Arg-393, and Lys-423 together coordinate phosphoenolpyruvate.

It belongs to the EPSP synthase family. As to quaternary structure, monomer.

The protein resides in the cytoplasm. The enzyme catalyses 3-phosphoshikimate + phosphoenolpyruvate = 5-O-(1-carboxyvinyl)-3-phosphoshikimate + phosphate. The protein operates within metabolic intermediate biosynthesis; chorismate biosynthesis; chorismate from D-erythrose 4-phosphate and phosphoenolpyruvate: step 6/7. Functionally, catalyzes the transfer of the enolpyruvyl moiety of phosphoenolpyruvate (PEP) to the 5-hydroxyl of shikimate-3-phosphate (S3P) to produce enolpyruvyl shikimate-3-phosphate and inorganic phosphate. This chain is 3-phosphoshikimate 1-carboxyvinyltransferase, found in Janthinobacterium sp. (strain Marseille) (Minibacterium massiliensis).